The primary structure comprises 164 residues: Lipoprotein signal peptidase (164 aa).

3 helical membrane passes run 12–32, 70–90, and 102–122; these read WLWLVVVVLIIDLGSKYLILQ, WFFAGIAIGISVILAVMMYRL, and ALIIGGALGNLFDRLWHGFVV. Catalysis depends on residues aspartate 123 and aspartate 141. Residues 137 to 157 form a helical membrane-spanning segment; it reads FNLADTAICVGAALIVLEGFL.

The protein belongs to the peptidase A8 family.

The protein localises to the cell inner membrane. It carries out the reaction Release of signal peptides from bacterial membrane prolipoproteins. Hydrolyzes -Xaa-Yaa-Zaa-|-(S,diacylglyceryl)Cys-, in which Xaa is hydrophobic (preferably Leu), and Yaa (Ala or Ser) and Zaa (Gly or Ala) have small, neutral side chains.. The protein operates within protein modification; lipoprotein biosynthesis (signal peptide cleavage). This protein specifically catalyzes the removal of signal peptides from prolipoproteins. The protein is Lipoprotein signal peptidase of Shigella boydii serotype 4 (strain Sb227).